The primary structure comprises 387 residues: tRNA pseudouridine synthase B (387 aa).

Asp43 acts as the Nucleophile in catalysis.

This sequence belongs to the pseudouridine synthase TruB family. Type 1 subfamily.

It catalyses the reaction uridine(55) in tRNA = pseudouridine(55) in tRNA. Its function is as follows. Responsible for synthesis of pseudouridine from uracil-55 in the psi GC loop of transfer RNAs. This Bifidobacterium longum (strain DJO10A) protein is tRNA pseudouridine synthase B.